Consider the following 483-residue polypeptide: Glutamyl-tRNA(Gln) amidotransferase subunit A (483 aa).

Catalysis depends on charge relay system residues Lys76 and Ser151. The Acyl-ester intermediate role is filled by Ser175.

The protein belongs to the amidase family. GatA subfamily. In terms of assembly, heterotrimer of A, B and C subunits.

The enzyme catalyses L-glutamyl-tRNA(Gln) + L-glutamine + ATP + H2O = L-glutaminyl-tRNA(Gln) + L-glutamate + ADP + phosphate + H(+). Its function is as follows. Allows the formation of correctly charged Gln-tRNA(Gln) through the transamidation of misacylated Glu-tRNA(Gln) in organisms which lack glutaminyl-tRNA synthetase. The reaction takes place in the presence of glutamine and ATP through an activated gamma-phospho-Glu-tRNA(Gln). This Pseudomonas fluorescens (strain SBW25) protein is Glutamyl-tRNA(Gln) amidotransferase subunit A.